The following is a 314-amino-acid chain: Target of rapamycin complex subunit wat1 (314 aa).

7 WD repeats span residues 1–35 (MSVQ…CSRT), 38–76 (HADS…QMPL), 81–120 (GHTN…VQRN), 122–161 (DHKS…CTHE), 165–204 (EEDV…GASL), 213–252 (AHQR…FMLE), and 257–296 (GHQR…TIRQ). S141 bears the Phosphoserine mark.

This sequence belongs to the WD repeat LST8 family. The target of rapamycin complex 1 (TORC1) is composed of at least mip1, pop3/wat1, tco89, toc1 and tor2. The target of rapamycin complex 2 (TORC2) is composed of at least bit61, pop3/wat1, sin1, ste20 and tor1. Interacts with prp2.

The protein localises to the cytoplasm. It is found in the nucleus. In terms of biological role, component of both TORC1 and TORC2, which regulate multiple cellular processes to control cell growth in response to environmental signals. Nutrient limitation and environmental stress signals cause inactivation of TORC1. Active TORC1 positively controls cell growth and ribosome biogenesis by regulating ribosomal protein gene expression. TORC1 negatively controls G1 cell-cycle arrest, sexual development and amino acid uptake. Represses mating, meiosis and sporulation efficiency by interfering with the functions of the transcription factor ste11 and the meiosis-promoting RNA-binding protein mei2. TORC2 is required for cell survival under various stress conditions. TORC2 positively controls G1 cell-cycle arrest, sexual development and amino acid uptake. Positively regulates amino acid uptake through the control of expression of amino acid permeases. May play a role in mRNA maturation as a coupling protein between splicing and synthesis and/or stabilization. This Schizosaccharomyces pombe (strain 972 / ATCC 24843) (Fission yeast) protein is Target of rapamycin complex subunit wat1.